The sequence spans 256 residues: Deoxyribose-phosphate aldolase (256 aa).

Asp102 functions as the Proton donor/acceptor in the catalytic mechanism. The active-site Schiff-base intermediate with acetaldehyde is the Lys165. Lys197 functions as the Proton donor/acceptor in the catalytic mechanism.

The protein belongs to the DeoC/FbaB aldolase family. DeoC type 2 subfamily.

It localises to the cytoplasm. It catalyses the reaction 2-deoxy-D-ribose 5-phosphate = D-glyceraldehyde 3-phosphate + acetaldehyde. It functions in the pathway carbohydrate degradation; 2-deoxy-D-ribose 1-phosphate degradation; D-glyceraldehyde 3-phosphate and acetaldehyde from 2-deoxy-alpha-D-ribose 1-phosphate: step 2/2. In terms of biological role, catalyzes a reversible aldol reaction between acetaldehyde and D-glyceraldehyde 3-phosphate to generate 2-deoxy-D-ribose 5-phosphate. In Shewanella sp. (strain MR-7), this protein is Deoxyribose-phosphate aldolase.